The chain runs to 243 residues: 4-hydroxy-tetrahydrodipicolinate reductase (243 aa).

Residues 9–14 (GANGKM), 78–80 (GTS), and 104–107 (APNF) contribute to the NAD(+) site. Histidine 134 functions as the Proton donor/acceptor in the catalytic mechanism. Residue histidine 135 participates in (S)-2,3,4,5-tetrahydrodipicolinate binding. Lysine 138 (proton donor) is an active-site residue. 144–145 (GT) provides a ligand contact to (S)-2,3,4,5-tetrahydrodipicolinate.

Belongs to the DapB family.

It is found in the cytoplasm. The enzyme catalyses (S)-2,3,4,5-tetrahydrodipicolinate + NAD(+) + H2O = (2S,4S)-4-hydroxy-2,3,4,5-tetrahydrodipicolinate + NADH + H(+). The catalysed reaction is (S)-2,3,4,5-tetrahydrodipicolinate + NADP(+) + H2O = (2S,4S)-4-hydroxy-2,3,4,5-tetrahydrodipicolinate + NADPH + H(+). It functions in the pathway amino-acid biosynthesis; L-lysine biosynthesis via DAP pathway; (S)-tetrahydrodipicolinate from L-aspartate: step 4/4. Its function is as follows. Catalyzes the conversion of 4-hydroxy-tetrahydrodipicolinate (HTPA) to tetrahydrodipicolinate. The polypeptide is 4-hydroxy-tetrahydrodipicolinate reductase (Legionella pneumophila (strain Corby)).